Here is a 293-residue protein sequence, read N- to C-terminus: 4-hydroxy-tetrahydrodipicolinate synthase (293 aa).

Pyruvate is bound at residue Thr-45. Residue Tyr-133 is the Proton donor/acceptor of the active site. The active-site Schiff-base intermediate with substrate is the Lys-162. Pyruvate is bound at residue Ile-204.

Belongs to the DapA family. Homotetramer; dimer of dimers.

It localises to the cytoplasm. It carries out the reaction L-aspartate 4-semialdehyde + pyruvate = (2S,4S)-4-hydroxy-2,3,4,5-tetrahydrodipicolinate + H2O + H(+). The protein operates within amino-acid biosynthesis; L-lysine biosynthesis via DAP pathway; (S)-tetrahydrodipicolinate from L-aspartate: step 3/4. Functionally, catalyzes the condensation of (S)-aspartate-beta-semialdehyde [(S)-ASA] and pyruvate to 4-hydroxy-tetrahydrodipicolinate (HTPA). The chain is 4-hydroxy-tetrahydrodipicolinate synthase from Brucella suis biovar 1 (strain 1330).